The primary structure comprises 148 residues: Snaclec convulxin subunit beta (148 aa).

The N-terminal stretch at 1–23 (MGRFIFVSFGLLVVFLSLSGSEA) is a signal peptide. Cystine bridges form between C27/C38, C55/C144, and C121/C136. A C-type lectin domain is found at 34–148 (YDRYCYKVFK…TYSFVCKFEA (115 aa)).

Belongs to the snaclec family. In terms of assembly, tetramer of heterodimers of alpha and beta subunits (alphabeta)(4); disulfide-linked. In terms of tissue distribution, expressed by the venom gland.

Its subcellular location is the secreted. Functionally, snake venom lectin that activates platelets by binding to the platelet collagen receptor glycoprotein VI (GP6). The indirect activation of integrin alpha-IIb/beta-3 (ITGA2B/ITGB3) also induced by the toxin is upstream the cytoskeletal translocation of GPIb, FcRgamma (FCER1G) and 14-3-3zeta (YWHAZ). The chain is Snaclec convulxin subunit beta from Crotalus durissus terrificus (South American rattlesnake).